A 184-amino-acid polypeptide reads, in one-letter code: UPF0397 protein SAR2767 (184 aa).

5 helical membrane passes run 11 to 31 (VVAIGIGAAVFVILGRFVVIP), 44 to 64 (AFLALISAIFGPFAGLMTGLI), 77 to 97 (AWWSWVICSGIIGCLYGWIGL), 117 to 137 (GQIIANIICWALIAPTLDILI), and 148 to 168 (QGVISAVLNIISVGIIGTILL).

It belongs to the UPF0397 family.

Its subcellular location is the cell membrane. The chain is UPF0397 protein SAR2767 from Staphylococcus aureus (strain MRSA252).